A 229-amino-acid chain; its full sequence is ATP synthase subunit a 1 (229 aa).

6 helical membrane passes run 25-45 (ADAV…SFLA), 86-106 (VATV…PGFF), 111-131 (NINT…VVGI), 142-162 (FCGP…IGHL), 181-201 (LVLI…MMLM), and 202-222 (GVLV…IYIQ).

The protein belongs to the ATPase A chain family. F-type ATPases have 2 components, CF(1) - the catalytic core - and CF(0) - the membrane proton channel. CF(1) has five subunits: alpha(3), beta(3), gamma(1), delta(1), epsilon(1). CF(0) has three main subunits: a(1), b(2) and c(9-12). The alpha and beta chains form an alternating ring which encloses part of the gamma chain. CF(1) is attached to CF(0) by a central stalk formed by the gamma and epsilon chains, while a peripheral stalk is formed by the delta and b chains.

The protein resides in the cell inner membrane. Functionally, key component of the proton channel; it plays a direct role in the translocation of protons across the membrane. This chain is ATP synthase subunit a 1, found in Pelobacter propionicus (strain DSM 2379 / NBRC 103807 / OttBd1).